Here is a 475-residue protein sequence, read N- to C-terminus: Adenylyl cyclase-associated protein 1 (475 aa).

At Ala2 the chain carries N-acetylalanine. Tyr31 is subject to Phosphotyrosine. The residue at position 34 (Ser34) is a Phosphoserine. Position 81 is an N6-acetyllysine (Lys81). 2 disordered regions span residues 216-255 (ELSGLPSGPSAGSGPPPPPPGPPPPPVSTSSGSDESASRS) and 278-318 (MKTH…TKKE). Residues 218 to 228 (SGLPSGPSAGS) are compositionally biased toward low complexity. Pro residues predominate over residues 229–242 (GPPPPPPGPPPPPV). Residues 243–255 (STSSGSDESASRS) show a composition bias toward low complexity. Lys287 carries the N6-methyllysine modification. Phosphoserine occurs at positions 290, 295, and 301. Pro residues predominate over residues 300-312 (FSAPKPQTSPSPK). At Thr307 the chain carries Phosphothreonine. A phosphoserine mark is found at Ser308 and Ser310. The C-CAP/cofactor C-like domain maps to 313–453 (PATKKEPAVL…EGGDFNEFPV (141 aa)). Lys348 participates in a covalent cross-link: Glycyl lysine isopeptide (Lys-Gly) (interchain with G-Cter in SUMO1).

It belongs to the CAP family. In terms of assembly, homodimer. Binds actin monomers.

The protein localises to the cell membrane. In terms of biological role, directly regulates filament dynamics and has been implicated in a number of complex developmental and morphological processes, including mRNA localization and the establishment of cell polarity. The polypeptide is Adenylyl cyclase-associated protein 1 (CAP1) (Macaca fascicularis (Crab-eating macaque)).